The primary structure comprises 473 residues: Photosystem II CP43 reaction center protein (473 aa).

Residues 1-14 (MKTLYSLRRFYPVE) constitute a propeptide that is removed on maturation. An N-acetylthreonine modification is found at T15. A Phosphothreonine modification is found at T15. 5 consecutive transmembrane segments (helical) span residues 69-93 (LFEV…PHLA), 134-155 (LLGP…KDRN), 178-200 (KALY…RKIT), 255-275 (KPFA…LSYS), and 291-312 (WFNN…ASQA). Residue E367 coordinates [CaMn4O5] cluster. The helical transmembrane segment at 447–471 (RARAAAAGFEKGIDRDFEPVLSMTP) threads the bilayer.

It belongs to the PsbB/PsbC family. PsbC subfamily. In terms of assembly, PSII is composed of 1 copy each of membrane proteins PsbA, PsbB, PsbC, PsbD, PsbE, PsbF, PsbH, PsbI, PsbJ, PsbK, PsbL, PsbM, PsbT, PsbX, PsbY, PsbZ, Psb30/Ycf12, at least 3 peripheral proteins of the oxygen-evolving complex and a large number of cofactors. It forms dimeric complexes. Requires Binds multiple chlorophylls and provides some of the ligands for the Ca-4Mn-5O cluster of the oxygen-evolving complex. It may also provide a ligand for a Cl- that is required for oxygen evolution. PSII binds additional chlorophylls, carotenoids and specific lipids. as cofactor.

Its subcellular location is the plastid. The protein localises to the chloroplast thylakoid membrane. Functionally, one of the components of the core complex of photosystem II (PSII). It binds chlorophyll and helps catalyze the primary light-induced photochemical processes of PSII. PSII is a light-driven water:plastoquinone oxidoreductase, using light energy to abstract electrons from H(2)O, generating O(2) and a proton gradient subsequently used for ATP formation. The polypeptide is Photosystem II CP43 reaction center protein (Eucalyptus globulus subsp. globulus (Tasmanian blue gum)).